Here is an 86-residue protein sequence, read N- to C-terminus: Chymotrypsin inhibitor (86 aa).

Residues 1–22 form the signal peptide; that stretch reads MKLLFAIVALLALAFLCADISA.

It belongs to the protease inhibitor I13 (potato type I serine protease inhibitor) family. Monomer. As to expression, expressed in the body wall, coelomocytes and at a lower level in intestine.

It is found in the secreted. Its function is as follows. Inhibits L.terrestris digestive chymotrypsin LT_CH 1 and bovine alpha-chymotrypsin. The chain is Chymotrypsin inhibitor from Lumbricus terrestris (Common earthworm).